Reading from the N-terminus, the 508-residue chain is Cyclic AMP-responsive element-binding protein 5 (508 aa).

A C2H2-type zinc finger spans residues 16-40; sequence FVCSAPGCSQRFPTEDHLMIHRHKH. A Glycyl lysine isopeptide (Lys-Gly) (interchain with G-Cter in SUMO2) cross-link involves residue Lys50. Phosphothreonine occurs at positions 59 and 61. Ser137 bears the Phosphoserine mark. A disordered region spans residues 265 to 391; it reads RQDQTPHHHM…LERNRAAATR (127 aa). 2 stretches are compositionally biased toward basic residues: residues 271–280 and 289–326; these read HHHMHSHPHQ and PYPHQHQHPAHHPHPQPHHQQNHPHHHSHSHLHAHPAH. A compositionally biased stretch (polar residues) spans 337 to 346; it reads TGNQAQVSPA. Residues 347–357 show a composition bias toward low complexity; the sequence is TQQMQPTQTIQ. Over residues 369 to 386 the composition is skewed to basic and acidic residues; that stretch reads VVDEDPDERRRKFLERNR. Residues 375–438 form the bZIP domain; sequence DERRRKFLER…AQLKQLLLTH (64 aa). Residues 377 to 397 form a basic motif region; it reads RRRKFLERNRAAATRCRQKRK. The tract at residues 403–431 is leucine-zipper; that stretch reads LEKKAEELTQTNMQLQNEVSMLKNEVAQL. A disordered region spans residues 449 to 468; that stretch reads ESQGYLSPESSPPASPVPAC.

The protein belongs to the bZIP family. Binds DNA as a homodimer or as a heterodimer with JUN or ATF2/CREBP1.

It is found in the nucleus. Functionally, binds to the cAMP response element and activates transcription. This Homo sapiens (Human) protein is Cyclic AMP-responsive element-binding protein 5 (CREB5).